Reading from the N-terminus, the 815-residue chain is MEGPRSDVGRWGRSPWQPPTTPSPEPEPEPEPDRRSRSRRGGGRSFWARCCGCCSCGNRGDDDWGPEPSGSRSRGTSSRGRDSRGGRRPESRGSGVNAAGDGTIREGMLVVTGVDLLCSRSDQNRREHHTDEFEYDELIVRRGQPFHMILFLNREYESSDRIALELLIGSNPEVGKGTHVIIPVGKGGSGGWKAQVTKNNGHNLNLRVHTSPNAIIGKFQFTVRTRSEAGEFQLPFDPRNEIYILFNPWCPEDIVYVDHEDWRQEYVLNESGRIYYGTEAQIGERTWNYGQFDHGVLDACLYILDRRGMPYGGRGDPVSVSRVVSAMVNSLDDNGVLIGNWTGDYSRGTNPSAWVGSVEILLSYLRTGYSVPYGQCWVFAGVTTTVLRCLGFATRTVTNFNSAHDTDTSLTMDIYFDENMKPLEHLNHDSVWNFHVWNDCWMKRPDLPSGFDGWQVVDATPQETSSGIFCCGPCSVESVKNGLVYMKYDTPFIFAEVNSDKVYWQRQDDGSFKIVYVEEKAIGTLIVTKAIHSNNREDITHIYKHPEGSEAERRAVEKAAAHGSKPNVYATRDSAEDVAMQVEAQDAVMGQDLAVSVVLTNRGSSRRTVKLHLYLCVTYYTGVSGPTFKEAKKEVTLAPGASDSVTMPVAYKEYKPHLVDQGAMLLNVSGHVKESGQVLAKQHTFRLRTPDLSLTLLGAAVVGQECGVQIVFKNPLPVTLTNVVFRLEGSGLQRPKVLNVGDIGGNETVTLRQTFVPVRPGPRQLIASLDSPQLSQVHGVIQVDVAPASGGSGFSDAGGDSRSGENIPMAYRGGA.

Positions 1–10 (MEGPRSDVGR) are enriched in basic and acidic residues. Disordered stretches follow at residues 1–48 (MEGP…SFWA) and 62–101 (DDWG…AAGD). Residues 16–25 (WQPPTTPSPE) are compositionally biased toward pro residues. Phosphothreonine is present on Thr21. 5 positions are modified to phosphoserine: Ser23, Ser71, Ser83, Ser91, and Ser94. A compositionally biased stretch (low complexity) spans 66 to 78 (PEPSGSRSRGTSS). Residues 79–91 (RGRDSRGGRRPES) show a composition bias toward basic and acidic residues. Active-site residues include Cys376, His435, and Asp458. Residues Asn498, Asp500, Glu547, and Glu552 each coordinate Ca(2+). A disordered region spans residues 791-815 (GSGFSDAGGDSRSGENIPMAYRGGA). Ser803 is subject to Phosphoserine.

Belongs to the transglutaminase superfamily. Transglutaminase family. Interacts with PLAAT4. It depends on Ca(2+) as a cofactor. Tyrosine-phosphorylated. Post-translationally, palmitoylated. In terms of processing, the membrane anchorage region possesses a cluster of five cysteines within which fatty acid(s) may become thioester-linked. It is subject to phorbol ester-stimulated phosphorylation and is hypersensitive to proteolysis, which releases the enzyme in a soluble form. As to expression, expressed in large amounts in epithelial tissues (lung, liver and kidney).

The protein localises to the membrane. The catalysed reaction is L-glutaminyl-[protein] + L-lysyl-[protein] = [protein]-L-lysyl-N(6)-5-L-glutamyl-[protein] + NH4(+). In terms of biological role, catalyzes the cross-linking of proteins and the conjugation of polyamines to proteins. Responsible for cross-linking epidermal proteins during formation of the stratum corneum. Involved in cell proliferation. The polypeptide is Protein-glutamine gamma-glutamyltransferase K (Tgm1) (Mus musculus (Mouse)).